Consider the following 2896-residue polypeptide: 3'-5' exoribonuclease HELZ2 (2896 aa).

2 C3H1-type zinc fingers span residues 90–114 (VCHY…RSRE) and 217–246 (GQPP…HSAV). Residues 287–311 (LYCPACLVTCHSQEAFENHCASSEH) form a C2H2-type; atypical zinc finger. The C3H1-type 3 zinc-finger motif lies at 327–357 (SPPPGLSKFELCPKPDLCEYGDACTKAHSAQ). In terms of domain architecture, UvrD-like helicase ATP-binding spans 770 to 1126 (VALIAGWGPG…VVLSTVHTCQ (357 aa)). 791–798 (GPFGTGKT) lines the ATP pocket. Residues 810-1306 (RRPETKVLIC…ESTEAEDAEA (497 aa)) are interaction with THRAP3. The DEAA box motif lies at 914–917 (DEAA). Phosphoserine is present on Ser-1253. 3 short sequence motifs (LXXLL motif) span residues 1322 to 1326 (LRELL), 1365 to 1369 (LRKLL), and 1420 to 1424 (LVQLL). Residues 1581-1938 (REDCRAFLTF…VLQRQILLAL (358 aa)) enclose the RNB domain. The LXXLL motif 4 motif lies at 2259–2263 (LEGLP). The interval 2382 to 2896 (PSRFLERQTY…RVCRRPTMPS (515 aa)) is interaction with THRAP3. One can recognise a UvrD-like helicase ATP-binding 2 domain in the interval 2400–2675 (LNPSQNVAVR…HMLDTQYRMH (276 aa)). Position 2421–2428 (2421–2428 (GPPGTGKT)) interacts with ATP. The LXXLL motif 5 signature appears at 2476 to 2480 (LAGLL).

The protein belongs to the DNA2/NAM7 helicase family. As to quaternary structure, interacts with PPARA (via DNA-binding domain) and PPARG; the interaction stimulates the transcriptional activity of PPARA and PPARG. Interacts with THRAP3; the interaction is direct and HELZ2 and THRAP3 synergistically enhance the transcriptional activity of PPARG. It is probably part of the peroxisome proliferator activated receptor alpha interacting complex (PRIC). Expressed in various tissues including heart, pancreas, skeletal muscle, colon, spleen, liver, kidney, lung, peripheral blood and placenta.

Its subcellular location is the cytoplasm. It carries out the reaction Exonucleolytic cleavage in the 3'- to 5'-direction to yield nucleoside 5'-phosphates.. The catalysed reaction is ATP + H2O = ADP + phosphate + H(+). Can degrade highly structured RNAs through its concerted ATP-dependent RNA helicase and 3' to 5' exoribonuclease activities. Shows a strong preference for pyrimidine over purine residues for its nuclease activity. Acts as a transcriptional coactivator for a number of nuclear receptors including PPARA, PPARG, THRA, THRB and RXRA. The sequence is that of 3'-5' exoribonuclease HELZ2 from Homo sapiens (Human).